We begin with the raw amino-acid sequence, 312 residues long: Apolipoprotein E (312 aa).

A signal peptide spans 1–18 (MKALWAVLLATLLTGCLA). Repeat copies occupy residues 72-93 (VLME…EQLG), 94-115 (PVAE…ARLG), 116-137 (ADME…TMLG), 138-159 (QNTE…KRLM), 160-181 (RDAE…EGAE), 182-203 (RGVS…QRTA), 204-225 (NLGA…ERLR), and 226-247 (GRLE…EHME). Residues 72-247 (VLMEDTMTEV…RLEEMREHME (176 aa)) form an 8 X 22 AA approximate tandem repeats region. Met135 is modified (methionine sulfoxide). The tract at residues 150 to 160 (HLRKMRKRLMR) is LDL and other lipoprotein receptors binding. The interval 150 to 160 (HLRKMRKRLMR) is LDL receptor binding. 154 to 157 (MRKR) provides a ligand contact to heparin. The interval 202–282 (TANLGAGAAQ…SWFEPLVEDM (81 aa)) is lipid-binding and lipoprotein association. 221–228 (SERLRGRL) is a heparin binding site. Residues 258–312 (QQIRLQAEIFQARLKSWFEPLVEDMHRQLANLVEKIQSSVATNSVLSTSVPQENQ) form a homooligomerization region. Residues 270-282 (RLKSWFEPLVEDM) form a specificity for association with VLDL region.

Belongs to the apolipoprotein A1/A4/E family. Homotetramer. May interact with ABCA1; functionally associated with ABCA1 in the biogenesis of HDLs. May interact with APP/A4 amyloid-beta peptide; the interaction is extremely stable in vitro but its physiological significance is unclear. May interact with MAPT. May interact with MAP2. In the cerebrospinal fluid, interacts with secreted SORL1. Interacts with PMEL; this allows the loading of PMEL luminal fragment on ILVs to induce fibril nucleation. Post-translationally, APOE exists as multiple glycosylated and sialylated glycoforms within cells and in plasma. The extent of glycosylation and sialylation are tissue and context specific. Glycated in plasma VLDL. In terms of processing, phosphorylated by FAM20C in the extracellular medium.

The protein localises to the secreted. The protein resides in the extracellular space. Its subcellular location is the extracellular matrix. It is found in the extracellular vesicle. It localises to the endosome. The protein localises to the multivesicular body. Functionally, APOE is an apolipoprotein, a protein associating with lipid particles, that mainly functions in lipoprotein-mediated lipid transport between organs via the plasma and interstitial fluids. APOE is a core component of plasma lipoproteins and is involved in their production, conversion and clearance. Apolipoproteins are amphipathic molecules that interact both with lipids of the lipoprotein particle core and the aqueous environment of the plasma. As such, APOE associates with chylomicrons, chylomicron remnants, very low density lipoproteins (VLDL) and intermediate density lipoproteins (IDL) but shows a preferential binding to high-density lipoproteins (HDL). It also binds a wide range of cellular receptors including the LDL receptor/LDLR, the LDL receptor-related proteins LRP1, LRP2 and LRP8 and the very low-density lipoprotein receptor/VLDLR that mediate the cellular uptake of the APOE-containing lipoprotein particles. Finally, APOE also has a heparin-binding activity and binds heparan-sulfate proteoglycans on the surface of cells, a property that supports the capture and the receptor-mediated uptake of APOE-containing lipoproteins by cells. A main function of APOE is to mediate lipoprotein clearance through the uptake of chylomicrons, VLDLs, and HDLs by hepatocytes. APOE is also involved in the biosynthesis by the liver of VLDLs as well as their uptake by peripheral tissues ensuring the delivery of triglycerides and energy storage in muscle, heart and adipose tissues. By participating in the lipoprotein-mediated distribution of lipids among tissues, APOE plays a critical role in plasma and tissues lipid homeostasis. APOE is also involved in two steps of reverse cholesterol transport, the HDLs-mediated transport of cholesterol from peripheral tissues to the liver, and thereby plays an important role in cholesterol homeostasis. First, it is functionally associated with ABCA1 in the biogenesis of HDLs in tissues. Second, it is enriched in circulating HDLs and mediates their uptake by hepatocytes. APOE also plays an important role in lipid transport in the central nervous system, regulating neuron survival and sprouting. This is Apolipoprotein E (Apoe) from Arvicanthis niloticus (African grass rat).